A 632-amino-acid polypeptide reads, in one-letter code: Palmitoyltransferase ZDHHC17 (632 aa).

At 1 to 304 the chain is on the cytoplasmic side; it reads MQREEGFNTK…LKADKEFRQK (304 aa). Residues 11–305 form a necessary and sufficient for interaction with DNAJC5 and SNAP25 region; the sequence is MADGPDEYDT…KADKEFRQKV (295 aa). 7 ANK repeats span residues 51 to 86, 89 to 118, 123 to 152, 156 to 185, 189 to 219, 224 to 253, and 257 to 286; these read THID…VRQP, ENVT…IVDQ, LNST…DPSL, EGCS…DVDM, NGMT…SVNL, HKNT…NVDA, and KGES…AKGY. 2 consecutive transmembrane segments (helical) span residues 305–325 and 326–346; these read VMLG…DLNI and DSWL…QFLS. The Cytoplasmic segment spans residues 347 to 357; that stretch reads KSFFDHSMHSA. Residues 358–378 form a helical membrane-spanning segment; that stretch reads LPLGIYLATKFWMYVTWFFWF. Residues 379–381 are Lumenal-facing; sequence WND. Residues 382 to 402 traverse the membrane as a helical segment; sequence LNFLFIHLPFLANSVALFYNF. Residues 403 to 480 lie on the Cytoplasmic side of the membrane; that stretch reads GKSWKSDPGI…GNCVGAGNHR (78 aa). One can recognise a DHHC domain in the interval 437–487; the sequence is IFCSTCLIRKPVRSKHCGVCNRCIAKFDHHCPWVGNCVGAGNHRYFMGYLF. The active-site S-palmitoyl cysteine intermediate is the Cys-467. A helical membrane pass occupies residues 481–501; the sequence is YFMGYLFFLLFMICWMIYGCI. The Lumenal portion of the chain corresponds to 502-529; it reads SYWGLHCETTYTKDGFWTYITQIATCSP. Residues 530–550 form a helical membrane-spanning segment; that stretch reads WMFWMFLNSVFHFMWVAVLLM. Over 551–632 the chain is Cytoplasmic; the sequence is CQMYQISCLG…QISGSGYQLV (82 aa).

Belongs to the DHHC palmitoyltransferase family. AKR/ZDHHC17 subfamily. Interacts (via ANK repeats) with numerous proteins (via the consensus sequence motif [VIAP]-[VIT]-x-x-Q-P). Interacts (via ANK repeats) with CLIP3. Interacts (via ANK repeats) with HTT; this interaction is inversely correlated to the length of the polyglutamine tract added to the huntingtin protein in Huntington disease. Interacts (via ANK repeats) with DNAJC5 (via C-terminus). Interacts (via ANK repeats) with MAP6. Interacts (via ANK repeats) with SNAP23. Interacts (via ANK repeats) with SNAP25. Interacts (via ANK repeats) with EVL. Interacts with SPRED1 and SPRED3. Interacts with GPM6A and OPTN. May interact (via ANK repeats) with SPRED2. May interact with NTRK1; may regulate its localization and function. Post-translationally, autopalmitoylated. Autopalmitoylation has a regulatory role in ZDHHC17-mediated Mg(2+) transport. Expressed in all brain regions. Expression is highest in the cortex, cerebellum, occipital lobe and caudate and lowest in the spinal cord. Expression is also seen in testis, pancreas, heart and kidney.

The protein resides in the golgi apparatus membrane. It is found in the cytoplasmic vesicle membrane. The protein localises to the presynaptic cell membrane. It catalyses the reaction L-cysteinyl-[protein] + hexadecanoyl-CoA = S-hexadecanoyl-L-cysteinyl-[protein] + CoA. The catalysed reaction is L-cysteinyl-[protein] + tetradecanoyl-CoA = S-tetradecanoyl-L-cysteinyl-[protein] + CoA. The enzyme catalyses L-cysteinyl-[protein] + octadecanoyl-CoA = S-octadecanoyl-L-cysteinyl-[protein] + CoA. Functionally, palmitoyltransferase that catalyzes the addition of palmitate onto various protein substrates and is involved in a variety of cellular processes. Has no stringent fatty acid selectivity and in addition to palmitate can also transfer onto target proteins myristate from tetradecanoyl-CoA and stearate from octadecanoyl-CoA. Palmitoyltransferase specific for a subset of neuronal proteins, including SNAP25, DLG4/PSD95, GAD2, SYT1 and HTT. Also palmitoylates neuronal protein GPM6A as well as SPRED1 and SPRED3. Could also play a role in axonogenesis through the regulation of NTRK1 and the downstream ERK1/ERK2 signaling cascade. May be involved in the sorting or targeting of critical proteins involved in the initiating events of endocytosis at the plasma membrane. May play a role in Mg(2+) transport. Could also palmitoylate DNAJC5 and regulate its localization to the Golgi membrane. Palmitoylates CASP6, thereby preventing its dimerization and subsequent activation. The polypeptide is Palmitoyltransferase ZDHHC17 (Homo sapiens (Human)).